The primary structure comprises 249 residues: MSVTPVLDPEWQRSPEGLDYLSRVLRHNKRKFFGLIERPVLPPHLPADVAAYKVFVCGKSGVGKTSFIAKLSGLAVPSMHHETAGIQTTCMYWPVRPSGSARPVIFRFQFWDCGEGALRKFDHILPACKEKADAVLFLFSFTDRSSFEDVPALISRTLDQDEDVTRVVIGTKLDQYMHTDVTEDDLRDFQRTWQLPVMRVRSVNGPRMTDGRDLDGRAGLAECAPVLNGLAEILWHRDQVIAGLVGGAE.

Positions 46–249 (PADVAAYKVF…VIAGLVGGAE (204 aa)) are small GTPase-like. GTP-binding positions include 58-65 (GKSGVGKT) and 171-174 (TKLD).

It belongs to the small GTPase superfamily. Rab family. In terms of assembly, interacts with fuz.

Its subcellular location is the cytoplasm. It localises to the cytoskeleton. It is found in the cilium basal body. In terms of biological role, potential effector of the planar cell polarity signaling pathway. Plays a role in targeted membrane trafficking most probably at the level of vesicle fusion with membranes. Involved in cilium biogenesis by regulating the transport of cargo proteins to the basal body and to the apical tips of cilia. More generally involved in exocytosis in secretory cells. The chain is Ciliogenesis and planar polarity effector 2 from Xenopus laevis (African clawed frog).